We begin with the raw amino-acid sequence, 1304 residues long: Angiotensin-converting enzyme (1304 aa).

A signal peptide spans 1-27; the sequence is MGAASGRRGPGLLLPLLLLLPPQPALA. At 28–1257 the chain is on the extracellular side; the sequence is LDPGLQPGNF…LDAQQARVGQ (1230 aa). 6 N-linked (GlcNAc...) asparagine glycosylation sites follow: N36, N52, N72, N109, N144, and N158. 2 consecutive Peptidase M2 domains span residues 38–622 and 641–1220; these read SADE…LGWP and VTDE…LGWP. A disulfide bridge connects residues C155 and C163. Y229 is a binding site for chloride. N316 is a glycosylation site (N-linked (GlcNAc...) asparagine). C357 and C375 are joined by a disulfide. H388 contributes to the Zn(2+) binding site. Residue E389 is the Proton acceptor 1 of the active site. Residues H392 and E416 each coordinate Zn(2+). N440, N443, and N507 each carry an N-linked (GlcNAc...) asparagine glycan. H518 (proton donor 1) is an active-site residue. R527 is a binding site for chloride. The cysteines at positions 543 and 555 are disulfide-linked. Residue N675 is glycosylated (N-linked (GlcNAc...) asparagine). N-linked (GlcNAc...) (complex) asparagine glycosylation is found at N693 and N712. A disulfide bond links C755 and C761. An N-linked (GlcNAc...) asparagine glycan is attached at N758. 2 residues coordinate chloride: R789 and Y827. N940 is a glycosylation site (N-linked (GlcNAc...) asparagine). C955 and C973 are oxidised to a cystine. Zn(2+) is bound at residue H986. The active-site Proton acceptor 2 is the E987. The Zn(2+) site is built by H990 and E1014. The chloride site is built by W1088 and R1092. H1116 (proton donor 2) is an active-site residue. R1125 is a chloride binding site. An intrachain disulfide couples C1141 to C1153. N-linked (GlcNAc...) asparagine glycosylation occurs at N1189. Residues 1213–1254 form a juxtamembrane stalk region; it reads HGEKLGWPQYNWTPNSARSEGPLPDSGRVSFLGLDLDAQQAR. The helical transmembrane segment at 1258-1274 threads the bilayer; sequence WLLLFLGIALLVATLGL. The Cytoplasmic portion of the chain corresponds to 1275 to 1304; sequence SQRLFSIRHRSLHRHSHGPQFDSEVELRHS. S1297 carries the phosphoserine modification.

It belongs to the peptidase M2 family. Monomer and homodimer; homodimerizes following binding to an inhibitor. Interacts with calmodulin (CALM1, CALM2 or CALM3); interaction takes place in the cytoplasmic region and regulates phosphorylation and proteolytic cleavage. Zn(2+) serves as cofactor. It depends on chloride as a cofactor. Post-translationally, produced following proteolytic cleavage by secretase enzymes that cleave the transmembrane form in the juxtamembrane stalk region upstream of the transmembrane region. Cleavage can take place at different sites of the juxtamembrane stalk region. In terms of processing, phosphorylated by CK2 on Ser-1297; which allows membrane retention. Phosphorylated on tyrosine residues on its extracellular part, promoting cleavage by secretase enzymes and formation of the soluble form (Angiotensin-converting enzyme, soluble form).

It is found in the cell membrane. The protein localises to the cytoplasm. Its subcellular location is the secreted. The enzyme catalyses Release of a C-terminal dipeptide, oligopeptide-|-Xaa-Yaa, when Xaa is not Pro, and Yaa is neither Asp nor Glu. Thus, conversion of angiotensin I to angiotensin II, with increase in vasoconstrictor activity, but no action on angiotensin II.. The catalysed reaction is angiotensin I + H2O = L-histidyl-L-leucine + angiotensin II. It carries out the reaction bradykinin + H2O = L-Phe-L-Arg + bradykinin(1-7). It catalyses the reaction substance P + H2O = substance P(1-9) + L-Leu-L-Met-NH2. The enzyme catalyses substance P + H2O = substance P(1-8) + Gly-L-Leu-L-Met-NH2. The catalysed reaction is substance P + H2O = L-Phe-L-Phe-Gly-L-Leu-L-Met-NH2 + substance P(1-6). It carries out the reaction neurotensin + H2O = neurotensin(1-11) + L-isoleucyl-L-leucine. It catalyses the reaction goralatide + H2O = N-acetyl-L-seryl-L-aspartate + L-lysyl-L-proline. The enzyme catalyses Met-enkephalin + H2O = L-phenylalanyl-L-methionine + L-tyrosylglycylglycine. The catalysed reaction is Leu-enkephalin + H2O = L-tyrosylglycylglycine + L-phenylalanyl-L-leucine. It carries out the reaction Met-enkephalin-Arg-Phe + H2O = L-arginyl-L-phenylalanine + Met-enkephalin. The dipeptidyl carboxypeptidase activity is strongly activated by chloride. The dipeptidyl carboxypeptidase activity is specifically inhibited by lisinopril, captopril and enalaprilat. Its activity is regulated as follows. Strongly inhibited by lisinopril and captopril. Its function is as follows. Dipeptidyl carboxypeptidase that removes dipeptides from the C-terminus of a variety of circulating hormones, such as angiotensin I, bradykinin or enkephalins, thereby playing a key role in the regulation of blood pressure, electrolyte homeostasis or synaptic plasticity. Composed of two similar catalytic domains, each possessing a functional active site, with different selectivity for substrates. Plays a major role in the angiotensin-renin system that regulates blood pressure and sodium retention by the kidney by converting angiotensin I to angiotensin II, resulting in an increase of the vasoconstrictor activity of angiotensin. Also able to inactivate bradykinin, a potent vasodilator, and therefore enhance the blood pressure response. Acts as a regulator of synaptic transmission by mediating cleavage of neuropeptide hormones, such as substance P, neurotensin or enkephalins. Catalyzes degradation of different enkephalin neuropeptides (Met-enkephalin, Leu-enkephalin, Met-enkephalin-Arg-Phe and possibly Met-enkephalin-Arg-Gly-Leu). Acts as a regulator of synaptic plasticity in the nucleus accumbens of the brain by mediating cleavage of Met-enkephalin-Arg-Phe, a strong ligand of Mu-type opioid receptor OPRM1, into Met-enkephalin. Met-enkephalin-Arg-Phe cleavage by ACE decreases activation of OPRM1, leading to long-term synaptic potentiation of glutamate release. Also acts as a regulator of hematopoietic stem cell differentiation by mediating degradation of hemoregulatory peptide N-acetyl-SDKP (AcSDKP). Acts as a regulator of cannabinoid signaling pathway by mediating degradation of hemopressin, an antagonist peptide of the cannabinoid receptor CNR1. Involved in amyloid-beta metabolism by catalyzing degradation of Amyloid-beta protein 40 and Amyloid-beta protein 42 peptides, thereby preventing plaque formation. Catalyzes cleavage of cholecystokinin (maturation of Cholecystokinin-8 and Cholecystokinin-5) and Gonadoliberin-1 (both maturation and degradation) hormones. Degradation of hemoregulatory peptide N-acetyl-SDKP (AcSDKP) and amyloid-beta proteins is mediated by the N-terminal catalytic domain, while angiotensin I and cholecystokinin cleavage is mediated by the C-terminal catalytic region. Functionally, soluble form that is released in blood plasma and other body fluids following proteolytic cleavage in the juxtamembrane stalk region. In terms of biological role, isoform produced by alternative promoter usage that is specifically expressed in spermatocytes and adult testis, and which is required for male fertility. In contrast to somatic isoforms, only contains one catalytic domain. Acts as a dipeptidyl carboxypeptidase that removes dipeptides from the C-terminus of substrates. The identity of substrates that are needed for male fertility is unknown. May also have a glycosidase activity which releases GPI-anchored proteins from the membrane by cleaving the mannose linkage in the GPI moiety. The GPIase activity was reported to be essential for the egg-binding ability of the sperm. This activity is however unclear and has been challenged by other groups, suggesting that it may be indirect. In Pan troglodytes (Chimpanzee), this protein is Angiotensin-converting enzyme.